Here is a 116-residue protein sequence, read N- to C-terminus: Large ribosomal subunit protein bL19 (116 aa).

This sequence belongs to the bacterial ribosomal protein bL19 family.

Its function is as follows. This protein is located at the 30S-50S ribosomal subunit interface and may play a role in the structure and function of the aminoacyl-tRNA binding site. This Chloroflexus aggregans (strain MD-66 / DSM 9485) protein is Large ribosomal subunit protein bL19.